The chain runs to 440 residues: Damage-control phosphatase ARMT1 (440 aa).

Positions 252 and 253 each coordinate Mn(2+). Residue 252–253 (DN) participates in substrate binding. The S-adenosyl-L-methionine site is built by Glu257 and Asp290. Asp290 lines the Mn(2+) pocket. Residues 366–370 (DLNYR) and Lys403 contribute to the substrate site. Positions 400-403 (RTLK) match the Subfamily III RTxK motif motif.

It belongs to the damage-control phosphatase family. Sugar phosphate phosphatase III subfamily. Mn(2+) is required as a cofactor. It depends on Ni(2+) as a cofactor. In terms of processing, automethylated.

The enzyme catalyses beta-D-fructose 1-phosphate + H2O = D-fructose + phosphate. It carries out the reaction beta-D-fructose 6-phosphate = dihydroxyacetone + D-glyceraldehyde 3-phosphate. The catalysed reaction is L-glutamyl-[protein] + S-adenosyl-L-methionine = [protein]-L-glutamate 5-O-methyl ester + S-adenosyl-L-homocysteine. Its function is as follows. Metal-dependent phosphatase that shows phosphatase activity against several substrates, including fructose-1-phosphate and fructose-6-phosphate. Its preference for fructose-1-phosphate, a strong glycating agent that causes DNA damage rather than a canonical yeast metabolite, suggests a damage-control function in hexose phosphate metabolism. Has also been shown to have O-methyltransferase activity that methylates glutamate residues of target proteins to form gamma-glutamyl methyl ester residues. Possibly methylates PCNA, suggesting it is involved in the DNA damage response. This chain is Damage-control phosphatase ARMT1, found in Xenopus laevis (African clawed frog).